The primary structure comprises 160 residues: Cytochrome b6-f complex subunit 4 (160 aa).

3 helical membrane passes run 36–56 (LLYIFPVVILGTFACVIGLSV), 95–115 (LLGVLLMAAVPAGLITVPFIE), and 131–151 (TLFLVGTLVAVWLGIGATLPI).

The protein belongs to the cytochrome b family. PetD subfamily. The 4 large subunits of the cytochrome b6-f complex are cytochrome b6, subunit IV (17 kDa polypeptide, petD), cytochrome f and the Rieske protein, while the 4 small subunits are petG, petL, petM and petN. The complex functions as a dimer.

Its subcellular location is the plastid. The protein resides in the chloroplast thylakoid membrane. Its function is as follows. Component of the cytochrome b6-f complex, which mediates electron transfer between photosystem II (PSII) and photosystem I (PSI), cyclic electron flow around PSI, and state transitions. This is Cytochrome b6-f complex subunit 4 from Tetradesmus obliquus (Green alga).